The sequence spans 290 residues: L-proline cis-3-hydroxylase 2 (290 aa).

The Fe cation site is built by His107, Asp109, and His158. Arg168 contributes to the 2-oxoglutarate binding site.

It belongs to the L-proline cis-4-/cis-3-hydroxylase family. Homodimer. Requires Fe(2+) as cofactor.

It catalyses the reaction L-proline + 2-oxoglutarate + O2 = cis-3-hydroxy-L-proline + succinate + CO2. With respect to regulation, inhibited by metal ions such as Co(2+), Zn(2+), Ni(2+) or Cu(2+). Is also inhibited by EDTA in vitro. Its function is as follows. Dioxygenase that catalyzes the 2-oxoglutarate-dependent selective hydroxylation of free L-proline to cis-3-hydroxy-L-proline (cis-3-Hyp). This chain is L-proline cis-3-hydroxylase 2, found in Streptomyces sp.